A 96-amino-acid chain; its full sequence is MLPEEIIKRPIITEKSMSMIPQKKYTFEVDRRANKIEIKKAVEQLFGVEVEKVWTMNVKPKRKRVGRFEGRTKAWKKAIVKLTDKSKTIEFFDSLI.

It belongs to the universal ribosomal protein uL23 family. In terms of assembly, part of the 50S ribosomal subunit. Contacts protein L29, and trigger factor when it is bound to the ribosome.

Its function is as follows. One of the early assembly proteins it binds 23S rRNA. One of the proteins that surrounds the polypeptide exit tunnel on the outside of the ribosome. Forms the main docking site for trigger factor binding to the ribosome. The protein is Large ribosomal subunit protein uL23 of Caldicellulosiruptor saccharolyticus (strain ATCC 43494 / DSM 8903 / Tp8T 6331).